The following is a 124-amino-acid chain: Colorectal cancer-associated protein 1 (124 aa).

A helical transmembrane segment spans residues 77–97 (LYGCFCVGLVSGMAISVLLLA).

Expressed in gastrointestinal and immune tissue, as well as prostate, testis and ovary. Expressed in lamina propria and eosinophils but not in epithelial cells. Expression is greater in benign adjacent tissues than in colon tumors.

It localises to the membrane. The chain is Colorectal cancer-associated protein 1 (COLCA1) from Homo sapiens (Human).